A 67-amino-acid chain; its full sequence is Large ribosomal subunit protein uL29 (67 aa).

This sequence belongs to the universal ribosomal protein uL29 family.

The protein is Large ribosomal subunit protein uL29 of Rhizorhabdus wittichii (strain DSM 6014 / CCUG 31198 / JCM 15750 / NBRC 105917 / EY 4224 / RW1) (Sphingomonas wittichii).